The following is a 161-amino-acid chain: MSIVTKSIVNADAEARYLSPGELDRIKSFVMSGQRRLRIAQILTDNRERIVKQAGQQLFQKRPDIVSPGGNAYGEEMTATCLRDLDYYLRLITYSVVAGDVIPIEEIGLVGVREMYNSLGTPLSGVAEGIRSMKSVVSGLLAGDDAAEASFYFDYAIGAMQ.

Residue Asn-71 is modified to N4-methylasparagine. Position 81 (Cys-81) interacts with (2R,3E)-phycocyanobilin.

This sequence belongs to the phycobiliprotein family. In terms of assembly, heterodimer of an alpha and a beta chain. Post-translationally, contains one covalently linked phycocyanobilin chromophore.

The protein localises to the plastid. It is found in the chloroplast thylakoid membrane. In terms of biological role, light-harvesting photosynthetic bile pigment-protein from the phycobiliprotein complex. Allophycocyanin has a maximum absorption at approximately 650 nanometers. The chain is Allophycocyanin alpha chain (apcA) from Cyanidium caldarium (Red alga).